The primary structure comprises 642 residues: Threonine--tRNA ligase (642 aa).

Positions 1-61 (MPVITLPDGS…ETDATLSIIT (61 aa)) constitute a TGS domain. Residues 243–534 (DHRKIGKQLD…LTEETAGYFP (292 aa)) are catalytic. Positions 334, 385, and 511 each coordinate Zn(2+).

Belongs to the class-II aminoacyl-tRNA synthetase family. In terms of assembly, homodimer. Zn(2+) serves as cofactor.

The protein resides in the cytoplasm. It catalyses the reaction tRNA(Thr) + L-threonine + ATP = L-threonyl-tRNA(Thr) + AMP + diphosphate + H(+). In terms of biological role, catalyzes the attachment of threonine to tRNA(Thr) in a two-step reaction: L-threonine is first activated by ATP to form Thr-AMP and then transferred to the acceptor end of tRNA(Thr). Also edits incorrectly charged L-seryl-tRNA(Thr). This chain is Threonine--tRNA ligase, found in Tolumonas auensis (strain DSM 9187 / NBRC 110442 / TA 4).